The following is a 528-amino-acid chain: Na(+)/H(+) antiporter NhaB (528 aa).

The next 11 membrane-spanning stretches (helical) occupy residues 29–49, 52–72, 95–115, 139–159, 203–223, 248–268, 304–324, 349–369, 390–410, 448–468, and 476–496; these read LIIN…LLVI, IFTL…LLAI, VLLL…LLLF, AFLS…AVAV, LLMH…VGEP, VPVF…KIFG, AFIG…VGLI, EEAL…AVII, LVIF…VFVG, ATPN…APLI, and VWMA…AIEL.

It belongs to the NhaB Na(+)/H(+) (TC 2.A.34) antiporter family.

The protein localises to the cell inner membrane. The enzyme catalyses 2 Na(+)(in) + 3 H(+)(out) = 2 Na(+)(out) + 3 H(+)(in). Na(+)/H(+) antiporter that extrudes sodium in exchange for external protons. The polypeptide is Na(+)/H(+) antiporter NhaB (Shewanella woodyi (strain ATCC 51908 / MS32)).